Consider the following 453-residue polypeptide: UDP-N-acetylmuramoylalanine--D-glutamate ligase (453 aa).

120–126 serves as a coordination point for ATP; that stretch reads GSNGKST.

The protein belongs to the MurCDEF family.

It localises to the cytoplasm. It catalyses the reaction UDP-N-acetyl-alpha-D-muramoyl-L-alanine + D-glutamate + ATP = UDP-N-acetyl-alpha-D-muramoyl-L-alanyl-D-glutamate + ADP + phosphate + H(+). The protein operates within cell wall biogenesis; peptidoglycan biosynthesis. In terms of biological role, cell wall formation. Catalyzes the addition of glutamate to the nucleotide precursor UDP-N-acetylmuramoyl-L-alanine (UMA). This is UDP-N-acetylmuramoylalanine--D-glutamate ligase from Nitrosococcus oceani (strain ATCC 19707 / BCRC 17464 / JCM 30415 / NCIMB 11848 / C-107).